A 920-amino-acid polypeptide reads, in one-letter code: Isoleucine--tRNA ligase (920 aa).

A 'HIGH' region motif is present at residues 57–67 (PYANGDIHLGH). Glu560 contacts L-isoleucyl-5'-AMP. Residues 601–605 (KMSKS) carry the 'KMSKS' region motif. Position 604 (Lys604) interacts with ATP. Zn(2+)-binding residues include Cys890, Cys893, Cys910, and Cys913.

Belongs to the class-I aminoacyl-tRNA synthetase family. IleS type 1 subfamily. As to quaternary structure, monomer. Zn(2+) is required as a cofactor.

It localises to the cytoplasm. The enzyme catalyses tRNA(Ile) + L-isoleucine + ATP = L-isoleucyl-tRNA(Ile) + AMP + diphosphate. Catalyzes the attachment of isoleucine to tRNA(Ile). As IleRS can inadvertently accommodate and process structurally similar amino acids such as valine, to avoid such errors it has two additional distinct tRNA(Ile)-dependent editing activities. One activity is designated as 'pretransfer' editing and involves the hydrolysis of activated Val-AMP. The other activity is designated 'posttransfer' editing and involves deacylation of mischarged Val-tRNA(Ile). This chain is Isoleucine--tRNA ligase, found in Caldicellulosiruptor bescii (strain ATCC BAA-1888 / DSM 6725 / KCTC 15123 / Z-1320) (Anaerocellum thermophilum).